Consider the following 424-residue polypeptide: L-rhamnose isomerase (424 aa).

Residues histidine 261, aspartate 293, and aspartate 295 each contribute to the Mn(2+) site.

The protein belongs to the rhamnose isomerase family. Requires Mn(2+) as cofactor.

The protein localises to the cytoplasm. It carries out the reaction L-rhamnopyranose = L-rhamnulose. It functions in the pathway carbohydrate degradation; L-rhamnose degradation; glycerone phosphate from L-rhamnose: step 1/3. Functionally, catalyzes the interconversion of L-rhamnose and L-rhamnulose. The protein is L-rhamnose isomerase of Bacillus subtilis (strain 168).